Here is a 408-residue protein sequence, read N- to C-terminus: Collagen and calcium-binding EGF domain-containing protein 1 (408 aa).

Residues 1-35 (MVPPPLPSRGGAAKRQLGKSLGPLLLLLALGHTWT) form the signal peptide. The 42-residue stretch at 135–176 (DIDECATSNTTLCAHICINTMGSYHCECREGYILEDDGRTCT) folds into the EGF-like; calcium-binding domain. Intrachain disulfides connect cysteine 139–cysteine 151, cysteine 147–cysteine 160, and cysteine 162–cysteine 175. N-linked (GlcNAc...) asparagine glycosylation occurs at asparagine 143. Asparagine 183 is a glycosylation site (N-linked (GlcNAc...) asparagine). 2 disordered regions span residues 246 to 335 (YLPG…GPPG) and 361 to 408 (HRTH…NFYP). Collagen-like domains lie at 247–292 (LPGP…PMGP) and 302–335 (GRRG…GPPG). Over residues 272–281 (PGMPGPPGQP) the composition is skewed to pro residues. The segment covering 283-294 (PRGSMGPMGPSP) has biased composition (low complexity). The segment covering 325 to 334 (PGPPGSPGPP) has biased composition (pro residues). O-linked (Xyl...) (chondroitin sulfate) serine glycosylation occurs at serine 387. Residues 390–402 (DYSRRTEARDPEA) show a composition bias toward basic and acidic residues.

Belongs to the CCBE1 family.

The protein resides in the secreted. Required for lymphangioblast budding and angiogenic sprouting from venous endothelium during embryogenesis. This Mus musculus (Mouse) protein is Collagen and calcium-binding EGF domain-containing protein 1 (Ccbe1).